We begin with the raw amino-acid sequence, 99 residues long: NADH dehydrogenase [ubiquinone] 1 alpha subcomplex subunit 2 (99 aa).

Residue Ala-2 is modified to N-acetylalanine. Cys-24 and Cys-58 are oxidised to a cystine. Residue Lys-64 is modified to N6-acetyllysine; alternate. Residue Lys-64 is modified to N6-succinyllysine; alternate.

The protein belongs to the complex I NDUFA2 subunit family. In terms of assembly, complex I is composed of 45 different subunits.

It localises to the mitochondrion inner membrane. Accessory subunit of the mitochondrial membrane respiratory chain NADH dehydrogenase (Complex I), that is believed not to be involved in catalysis. Complex I functions in the transfer of electrons from NADH to the respiratory chain. The immediate electron acceptor for the enzyme is believed to be ubiquinone. The sequence is that of NADH dehydrogenase [ubiquinone] 1 alpha subcomplex subunit 2 (NDUFA2) from Homo sapiens (Human).